Reading from the N-terminus, the 1018-residue chain is Fibronectin-binding protein A (1018 aa).

The signal sequence occupies residues Met1–Ala36. Positions Tyr7–Ser18 match the YSIRK-G/S signaling motif motif. Residues Ala37–Asn511 are ligand-binding A region. Disordered regions lie at residues Ser38–Gln61 and Ala78–Thr195. 2 stretches are compositionally biased toward polar residues: residues Glu39 to Gln61 and Ala78 to Thr92. A compositionally biased stretch (basic and acidic residues) spans Thr112–Val126. Polar residues predominate over residues Thr129–Gln139. The tract at residues Gly194–Asn511 is fibrinogen/elastin/tropoelastin-binding. Positions Gly512–Thr872 are fibronectin-binding. The stretch at Glu545–Ile574 is one B-1 repeat. The 2 X approximate tandem repeats stretch occupies residues Glu545–Ser604. One copy of the B-2 repeat lies at Glu575–Ser604. Disordered regions lie at residues Gly595–His622, Leu740–Phe813, and Glu827–Phe997. A D-1 repeat occupies Gly745 to His782. The tract at residues Gly745–Pro878 is 4 X approximate tandem repeats, D-3 repeat has more fibronectin-binding activity. The stretch at Gly783–His820 is one D-2 repeat. The D-3 repeat unit spans residues Gly821–Ser859. Basic and acidic residues predominate over residues Glu827–Pro838. The stretch at Gly860–Pro878 is one D-4; truncated repeat. Positions Pro875 to Pro938 are enriched in pro residues. WR repeat units follow at residues Pro879–Thr892, Pro893–Thr906, Pro907–Thr920, Pro921–Lys934, and Pro935–Lys948. Residues Pro879–Lys948 are 5 X tandem repeats, Pro-rich (WR). Residues Leu982–Gly986 carry the LPXTG sorting signal motif. Thr985 carries the post-translational modification Pentaglycyl murein peptidoglycan amidated threonine. The propeptide at Gly986 to Ala1018 is removed by sortase.

It is found in the secreted. The protein localises to the cell wall. Its function is as follows. Possesses multiple, substituting fibronectin (Fn) binding regions, each capable of conferring adherence to both soluble and immobilized forms of Fn. This confers to S.aureus the ability to invade endothelial cells both in vivo and in vitro, without requiring additional factors, although in a slow and inefficient way through actin rearrangements in host cells. This invasion process is mediated by integrin alpha-5/beta-1. Promotes bacterial attachment to both soluble and immobilized forms of fibrinogen (Fg) by means of a unique binding site localized within the 17 C-terminal residues of the gamma-chain of human Fg. Both plasma proteins (Fn and Fg) function as a bridge between bacterium and host cell. Promotes attachment to immobilized elastin peptides in a dose-dependent and saturable manner. Promotes attachment to both full-length and segments of immobilized human tropoelastin at multiple sites in a dose and pH-dependent manner. Promotes adherence to and aggregation of activated platelets independently of other S.aureus surface molecules. Is a critical mediator implicated in the induction of experimental endocarditis in rats with catheter-induced aortic vegetations, promoting both colonization and persistence of the bacterium into the host. This is Fibronectin-binding protein A (fnbA) from Staphylococcus aureus (strain NCTC 8325 / PS 47).